A 429-amino-acid polypeptide reads, in one-letter code: [LysW]-aminoadipate semialdehyde transaminase (429 aa).

Residues 112 to 113 (GT) and phenylalanine 139 contribute to the pyridoxal 5'-phosphate site. Arginine 142 provides a ligand contact to substrate. Residue 226–229 (DEIQ) coordinates pyridoxal 5'-phosphate. Position 255 is an N6-(pyridoxal phosphate)lysine (lysine 255). Threonine 283 is a substrate binding site. Pyridoxal 5'-phosphate is bound at residue threonine 284. The disordered stretch occupies residues 408–429 (LRAQQSEMGQQQVSQGESVQTE). A compositionally biased stretch (low complexity) spans 411–429 (QQSEMGQQQVSQGESVQTE).

Belongs to the class-III pyridoxal-phosphate-dependent aminotransferase family. LysJ subfamily. As to quaternary structure, homodimer. The cofactor is pyridoxal 5'-phosphate.

The protein localises to the cytoplasm. The enzyme catalyses [amino-group carrier protein]-C-terminal-gamma-(L-lysyl)-L-glutamate + 2-oxoglutarate = [amino-group carrier protein]-C-terminal-N-(1-carboxy-5-oxopentan-1-yl)-L-glutamine + L-glutamate. It functions in the pathway amino-acid biosynthesis; L-lysine biosynthesis via AAA pathway; L-lysine from L-alpha-aminoadipate (Thermus route): step 4/5. In terms of biological role, catalyzes the transfer of the amino group of L-glutamate to [LysW]-aminoadipate 6-semialdehyde, generating [LysW]-gamma-L-lysine. The sequence is that of [LysW]-aminoadipate semialdehyde transaminase from Deinococcus radiodurans (strain ATCC 13939 / DSM 20539 / JCM 16871 / CCUG 27074 / LMG 4051 / NBRC 15346 / NCIMB 9279 / VKM B-1422 / R1).